Reading from the N-terminus, the 451-residue chain is Phosphoglucosamine mutase (451 aa).

Residue S107 is the Phosphoserine intermediate of the active site. 4 residues coordinate Mg(2+): S107, D246, D248, and D250. Residue S107 is modified to Phosphoserine.

Belongs to the phosphohexose mutase family. Mg(2+) is required as a cofactor. Post-translationally, activated by phosphorylation.

The catalysed reaction is alpha-D-glucosamine 1-phosphate = D-glucosamine 6-phosphate. Catalyzes the conversion of glucosamine-6-phosphate to glucosamine-1-phosphate. This chain is Phosphoglucosamine mutase, found in Burkholderia lata (strain ATCC 17760 / DSM 23089 / LMG 22485 / NCIMB 9086 / R18194 / 383).